The primary structure comprises 157 residues: UPF0251 protein CLK_0815 (157 aa).

This sequence belongs to the UPF0251 family.

The chain is UPF0251 protein CLK_0815 from Clostridium botulinum (strain Loch Maree / Type A3).